Consider the following 1225-residue polypeptide: Catenin delta-2 (1225 aa).

4 disordered regions span residues 1–51 (MFAR…TSAI), 87–117 (SETG…EDEL), 134–242 (SGIL…HLPD), and 256–312 (SSTL…KSYS). Composition is skewed to polar residues over residues 20–51 (QPSS…TSAI) and 98–108 (AEEQFQWQSQD). Residues 49–84 (SAILASVKEQELQFERLTRELEAERQIVASQLERCK) adopt a coiled-coil conformation. Residues 149–160 (SLLSQSALQLNS) show a composition bias toward low complexity. Polar residues-rich tracts occupy residues 172-187 (YHSN…TPSQ) and 195-209 (ARAT…TTSR). Residue Arg209 is modified to Omega-N-methylarginine. A compositionally biased stretch (pro residues) spans 217-229 (EPAPPPPPPPREP). Arg264 carries the post-translational modification Omega-N-methylarginine. Residues Ser267 and Ser276 each carry the phosphoserine modification. Omega-N-methylarginine occurs at positions 282 and 296. Over residues 299–312 (SPKQSPSRLAKSYS) the composition is skewed to polar residues. Phosphoserine is present on residues Ser327, Ser360, Ser415, and Ser461. One copy of the ARM 1 repeat lies at 394–438 (GSRASYSSQHGHLGPELRALQSPEHHIDPIYEDRVYQKPPMRSLS). Disordered regions lie at residues 432 to 483 (PPMR…NAAA) and 514 to 542 (SPYS…QKDP). The segment covering 469–478 (LQRTGSQHGP) has biased composition (polar residues). Position 514 is a phosphoserine (Ser514). A Phosphotyrosine modification is found at Tyr516. ARM repeat units follow at residues 540-579 (KDPR…HLCF), 582-621 (NKIK…NLVY), 626-666 (DDNK…NLSS), 682-724 (LTNA…NVSS), 728-773 (EARR…NLSY), 835-875 (PKGI…NLAA), 882-921 (VYIR…NMAL), and 975-1018 (MENA…SMWQ). Residues 1042–1077 (TIERDRQRPYSSSRTPSISPVRVSPNNRSASAPASP) are disordered. Over residues 1050–1059 (PYSSSRTPSI) the composition is skewed to polar residues. 2 positions are modified to phosphoserine: Ser1065 and Ser1076. A compositionally biased stretch (low complexity) spans 1065–1077 (SPNNRSASAPASP).

The protein belongs to the beta-catenin family. As to quaternary structure, binds to E-cadherin at a juxtamembrane site within the cytoplasmic domain. Interacts with PDZD2. Interacts with ZBTB33. Binds to PSEN1. Interacts with ARHGEF28. Interacts (via the extreme C-terminus) with FRMPD2 (via the PDZ 2 domain). Interacts with CDK5. Interacts with CTNNB1. Interacts with GSK3A and GSK3B. Interacts with DNM2. Interacts with CCDC85B. Post-translationally, O-glycosylated. Phosphorylated by CDK5. Phosphorylated by GSK3B. Expressed in brain; highest expression is observed in fetal brain.

Its subcellular location is the nucleus. The protein resides in the cell junction. The protein localises to the adherens junction. It localises to the cell projection. It is found in the dendrite. Its subcellular location is the perikaryon. Its function is as follows. Has a critical role in neuronal development, particularly in the formation and/or maintenance of dendritic spines and synapses. Involved in the regulation of Wnt signaling. It probably acts on beta-catenin turnover, facilitating beta-catenin interaction with GSK3B, phosphorylation, ubiquitination and degradation. Functions as a transcriptional activator when bound to ZBTB33. May be involved in neuronal cell adhesion and tissue morphogenesis and integrity by regulating adhesion molecules. This Homo sapiens (Human) protein is Catenin delta-2 (CTNND2).